The chain runs to 104 residues: Large ribosomal subunit protein bL21 (104 aa).

This sequence belongs to the bacterial ribosomal protein bL21 family. Part of the 50S ribosomal subunit. Contacts protein L20.

In terms of biological role, this protein binds to 23S rRNA in the presence of protein L20. This chain is Large ribosomal subunit protein bL21, found in Pseudomonas putida (strain W619).